Here is a 393-residue protein sequence, read N- to C-terminus: S-adenosylmethionine synthase 2 (393 aa).

Glu9 contributes to the Mg(2+) binding site. Position 15 (His15) interacts with ATP. Glu43 contacts K(+). 2 residues coordinate L-methionine: Glu56 and Gln99. Residues 167-169, 235-238, Asp246, 252-253, Ala269, Lys273, and Lys277 contribute to the ATP site; these read DGK, SGRF, and RK. Residue Asp246 coordinates L-methionine. Lys277 serves as a coordination point for L-methionine.

Belongs to the AdoMet synthase family. Homotetramer. It depends on Mn(2+) as a cofactor. The cofactor is Mg(2+). Co(2+) serves as cofactor. Requires K(+) as cofactor. Mostly expressed in flowers, seedpods and roots, and, to a lower extent, in stems and leaves.

It localises to the cytoplasm. It catalyses the reaction L-methionine + ATP + H2O = S-adenosyl-L-methionine + phosphate + diphosphate. It participates in amino-acid biosynthesis; S-adenosyl-L-methionine biosynthesis; S-adenosyl-L-methionine from L-methionine: step 1/1. Catalyzes the formation of S-adenosylmethionine from methionine and ATP. The reaction comprises two steps that are both catalyzed by the same enzyme: formation of S-adenosylmethionine (AdoMet) and triphosphate, and subsequent hydrolysis of the triphosphate. This Brassica juncea (Indian mustard) protein is S-adenosylmethionine synthase 2 (MSAMS2).